Here is a 344-residue protein sequence, read N- to C-terminus: Phosphate acyltransferase (344 aa).

It belongs to the PlsX family. Homodimer. Probably interacts with PlsY.

The protein localises to the cytoplasm. It catalyses the reaction a fatty acyl-[ACP] + phosphate = an acyl phosphate + holo-[ACP]. Its pathway is lipid metabolism; phospholipid metabolism. Catalyzes the reversible formation of acyl-phosphate (acyl-PO(4)) from acyl-[acyl-carrier-protein] (acyl-ACP). This enzyme utilizes acyl-ACP as fatty acyl donor, but not acyl-CoA. This chain is Phosphate acyltransferase, found in Actinobacillus pleuropneumoniae serotype 5b (strain L20).